The chain runs to 222 residues: Superoxide dismutase [Mn], mitochondrial (222 aa).

A mitochondrion-targeting transit peptide spans 1–24 (MLSRAVCGTGRQLAPALGYLGSRQ). H50 is a binding site for Mn(2+). Position 58 is a 3'-nitrotyrosine (Y58). K68 and K75 each carry N6-acetyllysine; alternate. An N6-succinyllysine; alternate mark is found at K68 and K75. Position 98 (H98) interacts with Mn(2+). Residue K114 is modified to N6-acetyllysine. Residues K122 and K130 each carry the N6-acetyllysine; alternate modification. 2 positions are modified to N6-succinyllysine; alternate: K122 and K130. D183 and H187 together coordinate Mn(2+). K202 is subject to N6-acetyllysine.

It belongs to the iron/manganese superoxide dismutase family. As to quaternary structure, homotetramer. Mn(2+) serves as cofactor. Nitrated under oxidative stress. Nitration coupled with oxidation inhibits the catalytic activity. In terms of processing, acetylation at Lys-122 decreases enzymatic activity. Deacetylated by SIRT3 upon exposure to ionizing radiations or after long fasting. Post-translationally, polyubiquitinated; leading to proteasomal degradation. Deubiquitinated by USP36 which increases protein stability.

The protein localises to the mitochondrion matrix. It catalyses the reaction 2 superoxide + 2 H(+) = H2O2 + O2. In terms of biological role, destroys superoxide anion radicals which are normally produced within the cells and which are toxic to biological systems. In Macaca fascicularis (Crab-eating macaque), this protein is Superoxide dismutase [Mn], mitochondrial (SOD2).